The chain runs to 358 residues: Probable isocitrate dehydrogenase [NAD] subunit alpha, mitochondrial (358 aa).

4 residues coordinate substrate: R108, R118, R139, and D226. Mg(2+)-binding residues include D226, D250, and D254.

This sequence belongs to the isocitrate and isopropylmalate dehydrogenases family. As to quaternary structure, heterooligomer of subunits alpha, beta, and gamma in the apparent ratio of 2:1:1. Mg(2+) serves as cofactor. It depends on Mn(2+) as a cofactor.

The protein localises to the mitochondrion. It catalyses the reaction D-threo-isocitrate + NAD(+) = 2-oxoglutarate + CO2 + NADH. This is Probable isocitrate dehydrogenase [NAD] subunit alpha, mitochondrial (idha-1) from Caenorhabditis elegans.